Reading from the N-terminus, the 821-residue chain is KN motif and ankyrin repeat domain-containing protein 3 (821 aa).

Over residues M1–L10 the composition is skewed to polar residues. Disordered regions lie at residues M1 to V36, G58 to Q184, L224 to T333, and A385 to E547. Over residues R77–A88 the composition is skewed to low complexity. Over residues P128 to A150 the composition is skewed to basic and acidic residues. Over residues P151–A181 the composition is skewed to low complexity. A phosphoserine mark is found at S152, S160, S164, S167, S168, and S177. Residues A181 to Q230 adopt a coiled-coil conformation. The span at A237–G261 shows a compositional bias: basic and acidic residues. Residues S271, S280, and S293 each carry the phosphoserine modification. Residues G367–T404 are a coiled coil. Composition is skewed to low complexity over residues E388–A400 and N494–G507. ANK repeat units follow at residues N622–R652, A656–A690, T695–A724, D728–I758, and E762–H785. The interval A784–Q821 is disordered. Polar residues predominate over residues S787 to T805.

As to expression, strongly expressed in breast, liver, lung, skeletal muscle and kidney.

Its function is as follows. May be involved in the control of cytoskeleton formation by regulating actin polymerization. The sequence is that of KN motif and ankyrin repeat domain-containing protein 3 from Homo sapiens (Human).